Reading from the N-terminus, the 107-residue chain is Phosphoribosyl-ATP pyrophosphatase (107 aa).

Belongs to the PRA-PH family.

The protein localises to the cytoplasm. It carries out the reaction 1-(5-phospho-beta-D-ribosyl)-ATP + H2O = 1-(5-phospho-beta-D-ribosyl)-5'-AMP + diphosphate + H(+). The protein operates within amino-acid biosynthesis; L-histidine biosynthesis; L-histidine from 5-phospho-alpha-D-ribose 1-diphosphate: step 2/9. The protein is Phosphoribosyl-ATP pyrophosphatase of Bacillus anthracis (strain A0248).